The primary structure comprises 614 residues: uncharacterized protein (614 aa).

4 helical membrane passes run 41–61, 87–107, 157–177, and 178–198; these read GWIFLLAILTVGTGVMEAVLF, LIGMAALLLISIVWGFLASAV, DTVLTLANMFVYVLVYFITSG, and VVLVALDSWFLLPFITWIILF. The ABC transmembrane type-1 domain maps to 43–330; sequence IFLLAILTVG…IMWESARLFE (288 aa). The 240-residue stretch at 364-603 folds into the ABC transporter domain; it reads IKFNDITFAY…NGLYAKLWNH (240 aa). An ATP-binding site is contributed by 397-404; that stretch reads GRSGAGKS.

Belongs to the ABC transporter superfamily.

Its subcellular location is the cell membrane. This is an uncharacterized protein from Haemophilus influenzae (strain ATCC 51907 / DSM 11121 / KW20 / Rd).